Consider the following 240-residue polypeptide: tRNA (guanine-N(1)-)-methyltransferase (240 aa).

S-adenosyl-L-methionine contacts are provided by residues Gly111 and 130 to 135; that span reads IGDYVI.

Belongs to the RNA methyltransferase TrmD family. Homodimer.

It is found in the cytoplasm. It carries out the reaction guanosine(37) in tRNA + S-adenosyl-L-methionine = N(1)-methylguanosine(37) in tRNA + S-adenosyl-L-homocysteine + H(+). In terms of biological role, specifically methylates guanosine-37 in various tRNAs. The polypeptide is tRNA (guanine-N(1)-)-methyltransferase (Mycoplasma capricolum subsp. capricolum (strain California kid / ATCC 27343 / NCTC 10154)).